Reading from the N-terminus, the 360-residue chain is Phospho-N-acetylmuramoyl-pentapeptide-transferase (360 aa).

Transmembrane regions (helical) follow at residues 21-41 (YITF…LWIG), 73-93 (TMGG…WADL), 98-118 (VWFV…DDYW), 132-152 (WKYF…YAVG), 168-188 (FMPQ…VGTS), 199-219 (GLAI…AWAT), 236-256 (AGEL…FLWY), 263-283 (VFMG…IAVL), 288-308 (LLLV…ILQV), and 338-358 (VIVR…VTLK).

The protein belongs to the glycosyltransferase 4 family. MraY subfamily. It depends on Mg(2+) as a cofactor.

The protein resides in the cell inner membrane. It catalyses the reaction UDP-N-acetyl-alpha-D-muramoyl-L-alanyl-gamma-D-glutamyl-meso-2,6-diaminopimeloyl-D-alanyl-D-alanine + di-trans,octa-cis-undecaprenyl phosphate = di-trans,octa-cis-undecaprenyl diphospho-N-acetyl-alpha-D-muramoyl-L-alanyl-D-glutamyl-meso-2,6-diaminopimeloyl-D-alanyl-D-alanine + UMP. It participates in cell wall biogenesis; peptidoglycan biosynthesis. Functionally, catalyzes the initial step of the lipid cycle reactions in the biosynthesis of the cell wall peptidoglycan: transfers peptidoglycan precursor phospho-MurNAc-pentapeptide from UDP-MurNAc-pentapeptide onto the lipid carrier undecaprenyl phosphate, yielding undecaprenyl-pyrophosphoryl-MurNAc-pentapeptide, known as lipid I. This is Phospho-N-acetylmuramoyl-pentapeptide-transferase from Actinobacillus pleuropneumoniae serotype 3 (strain JL03).